The following is a 35-amino-acid chain: Peptide Hact-3 (35 aa).

As to expression, expressed in tentacles.

The protein resides in the nematocyst. The protein localises to the secreted. Peptide with unknown function. Does not exhibit antimicrobial activity against Escherichia coli and Staphylococcus aureus. The chain is Peptide Hact-3 from Heliofungia actiniformis (Mushroom coral).